An 862-amino-acid polypeptide reads, in one-letter code: Rab GTPase-binding effector protein 1 (862 aa).

Alanine 2 carries the post-translational modification N-acetylalanine. Residues 11–345 (DVSLQQRVAE…KKADVEEEIK (335 aa)) are a coiled coil. Residue lysine 282 is modified to N6-acetyllysine. A disordered region spans residues 315 to 338 (ELKKKDQEDDEQQRLNKRKDHKKA). 3 positions are modified to phosphoserine: serine 374, serine 377, and serine 407. At threonine 408 the chain carries Phosphothreonine. At serine 410 the chain carries Phosphoserine. The interaction with AP1G1, AP1G2, GGA1, GGA2 and GGA3 stretch occupies residues 435-447 (DESDFGPLVGADS). The stretch at 534 to 816 (DMCSNYEKQL…LQTELDVSEQ (283 aa)) forms a coiled coil.

It belongs to the rabaptin family. In terms of assembly, homodimer when bound to RAB5A. Heterodimer with RABGEF1. The heterodimer binds RAB4A and RAB5A that have been activated by GTP-binding. Interacts with TSC2. Interacts with GGA1 (via GAE domain), GGA2 (via GAE domain) and GGA3 (via GAE domain). Interacts with AP1G1 (via GAE domain). Interacts with AP1G2 (via GAE domain). Interacts with ECPAS. Interacts with KCNH1. Interacts with PKD1 (via C-terminal domain) and GGA1; the interactions recruit PKD1:PKD2 complex to GGA1 and ARL3 at trans-Golgi network. Post-translationally, proteolytic cleavage by caspases in apoptotic cells causes loss of endosome fusion activity.

The protein resides in the cytoplasm. It localises to the early endosome. It is found in the recycling endosome. Its subcellular location is the cytoplasmic vesicle. Rab effector protein acting as linker between gamma-adaptin, RAB4A and RAB5A. Involved in endocytic membrane fusion and membrane trafficking of recycling endosomes. Involved in KCNH1 channels trafficking to and from the cell membrane. Stimulates RABGEF1 mediated nucleotide exchange on RAB5A. Mediates the traffic of PKD1:PKD2 complex from the endoplasmic reticulum through the Golgi to the cilium. This is Rab GTPase-binding effector protein 1 (RABEP1) from Homo sapiens (Human).